Here is a 278-residue protein sequence, read N- to C-terminus: Small ribosomal subunit protein uS2 (278 aa).

Residues 233-257 (IDMEAAGEAPANKGKKKSVKARLDK) form a disordered region.

It belongs to the universal ribosomal protein uS2 family.

This chain is Small ribosomal subunit protein uS2, found in Bacteroides thetaiotaomicron (strain ATCC 29148 / DSM 2079 / JCM 5827 / CCUG 10774 / NCTC 10582 / VPI-5482 / E50).